The following is a 253-amino-acid chain: Tetraspanin-11 (253 aa).

Helical transmembrane passes span 19 to 39 (LLFIFNFFFWVGGAAVMAVGI), 63 to 83 (VLIFVGGLVMTTGFLGFGAII), 93 to 113 (YFCLLLAIFLVELVAGVLAHV), and 220 to 240 (LLLMGAVGIGVACLQICGMVL).

This sequence belongs to the tetraspanin (TM4SF) family.

It localises to the membrane. The protein is Tetraspanin-11 (Tspan11) of Rattus norvegicus (Rat).